A 365-amino-acid polypeptide reads, in one-letter code: Peptide chain release factor 2 (365 aa).

N5-methylglutamine is present on Gln-251.

The protein belongs to the prokaryotic/mitochondrial release factor family. In terms of processing, methylated by PrmC. Methylation increases the termination efficiency of RF2.

It localises to the cytoplasm. In terms of biological role, peptide chain release factor 2 directs the termination of translation in response to the peptide chain termination codons UGA and UAA. This chain is Peptide chain release factor 2, found in Campylobacter jejuni subsp. doylei (strain ATCC BAA-1458 / RM4099 / 269.97).